Consider the following 470-residue polypeptide: MLNHVVTRFAPSPTGHLHLGGARTALFNWLYAKHNNGKFLLRIEDTDSKRSSKELIDSIINSMIWLNIQHDGEIILQSSRISRHIEIANQLILNDKAYYCYCSEEEINLEKEQYTKKGLHYKHNCIWKNRKPPTGNCSKVIRLHSDTEGITEFKDKVYGTIAVNNVQLDDMVLLRSNNTPTYLLSVVVDDYDMGITHIIRGTDHLTNTARQLLIYNALGWKPPEFAHIPLIHDENGNKLSKRHHALGIHEYKNAGILPEALVNYLLRMGWSHGNDELITIDEAIRWFSIDKVGQSPAGLDSKKLEFLNNHYINTTNNATIIEMIIPIIEKTIGYKVNTEKIGYLLNGINELKKRTKNLVNLANESLFYVEDIPISFDQESLIIIKSNHDILSILYDNLSKVLNDDWNNSTLTSMIKNIVKDYNTKIHNIYHCLRASIIGRINAPSIIDIMVNFQREECLNRIKYARDMVK.

Positions 11–21 (PSPTGHLHLGG) match the 'HIGH' region motif. Positions 238–242 (KLSKR) match the 'KMSKS' region motif. An ATP-binding site is contributed by Lys241.

The protein belongs to the class-I aminoacyl-tRNA synthetase family. Glutamate--tRNA ligase type 1 subfamily. Monomer.

It localises to the cytoplasm. The enzyme catalyses tRNA(Glu) + L-glutamate + ATP = L-glutamyl-tRNA(Glu) + AMP + diphosphate. Its function is as follows. Catalyzes the attachment of glutamate to tRNA(Glu) in a two-step reaction: glutamate is first activated by ATP to form Glu-AMP and then transferred to the acceptor end of tRNA(Glu). The chain is Glutamate--tRNA ligase 2 from Ehrlichia ruminantium (strain Gardel).